The primary structure comprises 239 residues: Fatty acid metabolism regulator protein (239 aa).

The region spanning 6 to 74 (KGPASFAEKY…HGKPTRVNNF (69 aa)) is the HTH gntR-type domain. The segment at residues 34 to 53 (ERELSELIGVTRTTLREVLQ) is a DNA-binding region (H-T-H motif).

As to quaternary structure, homodimer.

The protein localises to the cytoplasm. In terms of biological role, multifunctional regulator of fatty acid metabolism. This chain is Fatty acid metabolism regulator protein, found in Shewanella halifaxensis (strain HAW-EB4).